A 749-amino-acid polypeptide reads, in one-letter code: Small G protein signaling modulator 3 (749 aa).

The 192-residue stretch at 114-305 (GIPHGMRPQL…RIWDLFFYEG (192 aa)) folds into the Rab-GAP TBC domain. Position 406 is a phosphoserine (Ser406). The stretch at 415 to 439 (EDDLEALKAKNIKQTELVADLREAI) forms a coiled coil. In terms of domain architecture, SH3 spans 480-539 (SHRRRAKALLDFERHDDDELGFRKNDIITIVSQKDEHCWVGELNGLRGWFPAKFVEVLDE). The RUN domain occupies 555-718 (GVTDLVRGTL…FAFSLSQDWE (164 aa)).

This sequence belongs to the small G protein signaling modulator family. Interacts with GJA1. Interaction with GJA1 induces its degradation. Interacts via its RUN domain with the C-terminal region of NF2. Interacts with RAB3A, RAB4A, RAB5A, RAB8A, RAB11A, RAP1A, RAP1B, RAP2A, RAP2B and PDCD6IP. No interaction with RAB27A. In terms of tissue distribution, widely expressed.

The protein localises to the cytoplasm. Functionally, may play a cooperative role in NF2-mediated growth suppression of cells. This is Small G protein signaling modulator 3 from Homo sapiens (Human).